The chain runs to 291 residues: N-acetylmannosamine kinase (291 aa).

Residues 5–12 and 132–139 each bind ATP; these read AIDIGGTK and GVGGGVVS. H156, C166, C168, and C173 together coordinate Zn(2+).

It belongs to the ROK (NagC/XylR) family. NanK subfamily. As to quaternary structure, homodimer.

The catalysed reaction is an N-acyl-D-mannosamine + ATP = an N-acyl-D-mannosamine 6-phosphate + ADP + H(+). It functions in the pathway amino-sugar metabolism; N-acetylneuraminate degradation; D-fructose 6-phosphate from N-acetylneuraminate: step 2/5. Catalyzes the phosphorylation of N-acetylmannosamine (ManNAc) to ManNAc-6-P. The protein is N-acetylmannosamine kinase of Escherichia coli (strain SMS-3-5 / SECEC).